The following is a 94-amino-acid chain: Secretoglobin family 1C member 1 (94 aa).

The N-terminal stretch at Met1–Ala22 is a signal peptide.

This sequence belongs to the secretoglobin family. Expressed in the olfactory mucosa.

It localises to the secreted. The protein is Secretoglobin family 1C member 1 (Scgb1c1) of Rattus norvegicus (Rat).